The chain runs to 523 residues: Calcium uptake protein 3, mitochondrial (523 aa).

The N-terminal 6 residues, 1–6, are a transit peptide targeting the mitochondrion; sequence MAALRR. Positions 18 to 48 are disordered; that stretch reads LAPQQPFLSPWGRPAGTAPGMSGRPFSGREE. Residues 225 to 260 enclose the EF-hand 1 domain; it reads KPHAGFRIAFNMFDTDGNEMVDKKEFLVLQEIFRKK. Ca(2+)-binding residues include D238, D240, N242, M244, D246, and E249. The 16-residue stretch at 414-429 folds into the EF-hand 2; degenerate domain; that stretch reads ITFDEFRSFFQFLNNL. Positions 463-498 constitute an EF-hand 3 domain; that stretch reads LSPHLVNTVFKIFDVDKDDQLSYKEFIGIMKDRLHR. Ca(2+) is bound by residues D476, D478, D480, Q482, and E487.

The protein belongs to the MICU1 family. MICU3 subfamily. In terms of assembly, heterodimer; disulfide-linked; heterodimerizes with MICU1. Component of the uniplex complex, composed of MCU, EMRE/SMDT1, MICU1 and MICU3 in a 4:4:1:1 stoichiometry.

The protein localises to the mitochondrion intermembrane space. Its subcellular location is the mitochondrion inner membrane. Tissue-specific calcium sensor of the mitochondrial calcium uniporter (MCU) channel, which specifically regulates MCU channel activity in the central nervous system and skeletal muscle. Senses calcium level via its EF-hand domains: compared to MICU1 and MICU2, MICU3 has a higher affinity for calcium. MICU1 and MICU3 form a disulfide-linked heterodimer that stimulates and inhibits MCU activity, depending on the concentration of calcium. At low calcium levels, MICU1 occludes the pore of the MCU channel, preventing mitochondrial calcium uptake. At higher calcium levels, calcium-binding to MICU1 and MICU3 induces a conformational change that weakens MCU-MICU1 interactions and moves the MICU1-MICU3 heterodimer away from the pore, allowing calcium permeation through the MCU channel. The high calcium affinity of MICU3 lowers the calcium threshold necessary for calcium permeation through the MCU channel. The MICU1-MICU3 heterodimer promotes flexibility of neurotransmission in neuronal cells by enhancing mitochondrial calcium uptake in presynapses. It is also required to increase mitochondrial calcium uptake in skeletal muscle cells, thereby increasing ATP production. The sequence is that of Calcium uptake protein 3, mitochondrial from Rattus norvegicus (Rat).